A 70-amino-acid chain; its full sequence is MEAGAYLNAIIFVLVATIIAVISRGLTRTEPCTIRITGESITVHACHIDSETIKALANLKPLSLERLSFQ.

Over 1-4 (MEAG) the chain is Lumenal. Residues 5-27 (AYLNAIIFVLVATIIAVISRGLT) form a helical membrane-spanning segment. The Cytoplasmic segment spans residues 28-70 (RTEPCTIRITGESITVHACHIDSETIKALANLKPLSLERLSFQ).

It belongs to the Tymovirales TGBp3 protein family.

It is found in the host endoplasmic reticulum membrane. In terms of biological role, plays a role in viral cell-to-cell propagation, by facilitating genome transport to neighboring plant cells through plasmosdesmata. May induce the formation of granular vesicles derived from the Endoplasmic reticulum, which align on actin filaments. The chain is Movement protein TGBp3 from Potato virus X (strain CP) (PVX).